A 186-amino-acid polypeptide reads, in one-letter code: ADP-ribosylation factor-like protein 8B (186 aa).

Residues 1-19 (MLALISRLLDWFRSLFWKE) constitute an intramembrane region (note=Mediates targeting to membranes). GTP contacts are provided by residues 29-35 (QYSGKTT), 71-75 (DIGGQ), and 130-133 (NKRD). Residue lysine 141 forms a Glycyl lysine isopeptide (Lys-Gly) (interchain with G-Cter in ubiquitin) linkage.

The protein belongs to the small GTPase superfamily. Arf family. In terms of assembly, interacts with tubulin. Interacts with BORCS5; recruits ARL8B to lysosomes. Interacts with VPS41; the interaction mediates the recruitment of the HOPS complex to lysosomes. Interacts (GTP-bound form) with PLEKHM2 (via RUN domain); the interaction is required to recruit the motor protein kinesin-1 on lysosomes. Interacts (GTP-bound form) with PLEKHM1 (via RUN domain); the interaction is required for PLEKHM1 localization to lysosomes and for ARL8B function in delivery and degradation of endocytic and autophagic cargo in lysosomes. PLEKHM1 and PLEKHM2 compete for interaction with ARL8B. Interacts (GTP-bound form) with RUFY1; the interaction is required for RUFY1 endosomal location. When GTP-bound, interacts with RUFY3 and RUFY4, but not with RUFY1, nor RUFY2. Post-translationally, ubiquitinated at Lys-141 by RNF167, leading to its degradation.

It is found in the late endosome membrane. It localises to the lysosome membrane. The protein resides in the cytoplasm. The protein localises to the cytoskeleton. Its subcellular location is the spindle. It is found in the cell projection. It localises to the axon. The protein resides in the synapse. The protein localises to the cytolytic granule membrane. Its subcellular location is the early endosome membrane. It carries out the reaction GTP + H2O = GDP + phosphate + H(+). Small GTPase which cycles between active GTP-bound and inactive GDP-bound states. In its active state, binds to a variety of effector proteins playing a key role in the regulation of lysosomal positioning which is important for nutrient sensing, natural killer cell-mediated cytotoxicity and antigen presentation. Along with its effectors, orchestrates lysosomal transport and fusion. Localizes specifically to lysosomal membranes and mediates anterograde lysosomal motility by recruiting PLEKHM2, which in turn recruits the motor protein kinesin-1 on lysosomes. Required for lysosomal and cytolytic granule exocytosis. Critical factor involved in NK cell-mediated cytotoxicity. Drives the polarization of cytolytic granules and microtubule-organizing centers (MTOCs) toward the immune synapse between effector NK lymphocytes and target cells. In neurons, mediates the anterograde axonal long-range transport of presynaptic lysosome-related vesicles required for presynaptic biogenesis and synaptic function. Also acts as a regulator of endosome to lysosome trafficking pathways of special significance for host defense. Recruits RUFY1 onto early endosomes regulating endosomes to trans-Golgi network proteins retrieval. Regulates cargo trafficking to lysosomes by binding to PLEKHM1 and recruiting the HOPS subunit VPS41, resulting in functional assembly of the HOPS complex on lysosomal membranes. Plays an important role in cargo delivery to lysosomes for antigen presentation and microbial killing. Directs the intersection of CD1d with lipid antigens in lysosomes, and plays a role in intersecting phagosomes with lysosomes to generate phagolysosomes that kill microbes. Involved in the process of MHC II presentation. Regulates the delivery of antigens to lysosomes and the formation of MHC II-peptide complexes through the recruitment of the HOPS complex to lysosomes allowing the fusion of late endosomes to lysosomes. May play a role in chromosome segregation. The sequence is that of ADP-ribosylation factor-like protein 8B (ARL8B) from Pongo abelii (Sumatran orangutan).